Consider the following 570-residue polypeptide: Methionine--tRNA ligase (570 aa).

Positions 11–21 match the 'HIGH' region motif; sequence PYVQTVPHLGN. Cys143, Cys146, Cys156, and Cys159 together coordinate Zn(2+). A 'KMSKS' region motif is present at residues 333–337; the sequence is KFSKS. Lys336 serves as a coordination point for ATP.

It belongs to the class-I aminoacyl-tRNA synthetase family. MetG type 1 subfamily. It depends on Zn(2+) as a cofactor.

The protein resides in the cytoplasm. It carries out the reaction tRNA(Met) + L-methionine + ATP = L-methionyl-tRNA(Met) + AMP + diphosphate. Its function is as follows. Is required not only for elongation of protein synthesis but also for the initiation of all mRNA translation through initiator tRNA(fMet) aminoacylation. The sequence is that of Methionine--tRNA ligase from Pyrobaculum aerophilum (strain ATCC 51768 / DSM 7523 / JCM 9630 / CIP 104966 / NBRC 100827 / IM2).